Reading from the N-terminus, the 177-residue chain is ATP synthase subunit delta (177 aa).

The protein belongs to the ATPase delta chain family. In terms of assembly, F-type ATPases have 2 components, F(1) - the catalytic core - and F(0) - the membrane proton channel. F(1) has five subunits: alpha(3), beta(3), gamma(1), delta(1), epsilon(1). F(0) has three main subunits: a(1), b(2) and c(10-14). The alpha and beta chains form an alternating ring which encloses part of the gamma chain. F(1) is attached to F(0) by a central stalk formed by the gamma and epsilon chains, while a peripheral stalk is formed by the delta and b chains.

The protein resides in the cell inner membrane. F(1)F(0) ATP synthase produces ATP from ADP in the presence of a proton or sodium gradient. F-type ATPases consist of two structural domains, F(1) containing the extramembraneous catalytic core and F(0) containing the membrane proton channel, linked together by a central stalk and a peripheral stalk. During catalysis, ATP synthesis in the catalytic domain of F(1) is coupled via a rotary mechanism of the central stalk subunits to proton translocation. In terms of biological role, this protein is part of the stalk that links CF(0) to CF(1). It either transmits conformational changes from CF(0) to CF(1) or is implicated in proton conduction. This Shigella boydii serotype 18 (strain CDC 3083-94 / BS512) protein is ATP synthase subunit delta.